The chain runs to 950 residues: F-box only protein 10 (950 aa).

In terms of domain architecture, F-box spans 1-48 (METGGLPLELWRMILAYLHLPDLGRCSLVCRAWYELILSLDSTRWRQL). 2 PbH1 repeats span residues 198–217 (SGHI…QVHG) and 238–260 (VPLC…TVEG). The segment at 313 to 364 (IEGSQSPTSPVCSSPKPGSKEAEVGSDGERVAQTPDSSDGGLSPSGEDEDDE) is disordered. Polar residues predominate over residues 315–324 (GSQSPTSPVC). Residues S321 and S326 each carry the phosphoserine modification. Residues 330 to 342 (GSKEAEVGSDGER) are compositionally biased toward basic and acidic residues. A compositionally biased stretch (low complexity) spans 347–357 (PDSSDGGLSPS). PbH1 repeat units lie at residues 423–444 (VQGC…FVCS), 467–489 (NSKI…FLRL), 490–512 (EGGG…DIRK), 513–535 (KSNP…VVLG), 536–558 (NGKG…YILY), 559–581 (HGNP…AVNE), 582–604 (NGKG…DIRR), 605–627 (GGVP…VVGD), 628–650 (EGKG…WMMS), 651–673 (SSLP…AVFS), 713–735 (ITVA…FVQS), 736–758 (SEAL…TIVQ), 760–782 (SQLT…KVEF), 783–805 (QCKV…ITKG), and 828–850 (RSDT…AVRG).

Component of the SCF(FBXO10) complex consisting of CUL1, SKP1 and FBXO10. Interacts with BCL2. Interacts with PRDM1. As to expression, particularly highly expressed in B-cells.

It is found in the cytoplasm. It participates in protein modification; protein ubiquitination. Its function is as follows. Substrate-recognition component of the SCF (SKP1-CUL1-F-box protein)-type E3 ubiquitin ligase complex. Mediates the ubiquitination and degradation of BCL2, an antiapoptotic protein, thereby playing a role in apoptosis by controlling the stability of BCL2. Targets also the receptor for advanced glycation end products RAGE for ubiquitination and subsequent lysosomal degradation. Directly controls HGAL/GCSAM ubiquitination and degradation and thereby decreases BCR signaling. This is F-box only protein 10 (Fbxo10) from Mus musculus (Mouse).